A 253-amino-acid chain; its full sequence is Methionine aminopeptidase (253 aa).

H78 lines the substrate pocket. Residues D95, D106, and H169 each contribute to the a divalent metal cation site. H176 is a substrate binding site. Residues E206 and E237 each contribute to the a divalent metal cation site.

This sequence belongs to the peptidase M24A family. Methionine aminopeptidase type 1 subfamily. As to quaternary structure, monomer. Co(2+) serves as cofactor. The cofactor is Zn(2+). It depends on Mn(2+) as a cofactor. Fe(2+) is required as a cofactor.

The enzyme catalyses Release of N-terminal amino acids, preferentially methionine, from peptides and arylamides.. Its function is as follows. Removes the N-terminal methionine from nascent proteins. The N-terminal methionine is often cleaved when the second residue in the primary sequence is small and uncharged (Met-Ala-, Cys, Gly, Pro, Ser, Thr, or Val). Requires deformylation of the N(alpha)-formylated initiator methionine before it can be hydrolyzed. The polypeptide is Methionine aminopeptidase (Helicobacter pylori (strain J99 / ATCC 700824) (Campylobacter pylori J99)).